Consider the following 187-residue polypeptide: Ribosome-recycling factor (187 aa).

This sequence belongs to the RRF family.

The protein localises to the cytoplasm. In terms of biological role, responsible for the release of ribosomes from messenger RNA at the termination of protein biosynthesis. May increase the efficiency of translation by recycling ribosomes from one round of translation to another. This chain is Ribosome-recycling factor, found in Ruegeria pomeroyi (strain ATCC 700808 / DSM 15171 / DSS-3) (Silicibacter pomeroyi).